Consider the following 488-residue polypeptide: UDP-N-acetylmuramoyl-L-alanyl-D-glutamate--2,6-diaminopimelate ligase (488 aa).

UDP-N-acetyl-alpha-D-muramoyl-L-alanyl-D-glutamate contacts are provided by residues Leu24, Ser26, and 41-43 (HQV). 113–119 (GTNGKTT) provides a ligand contact to ATP. UDP-N-acetyl-alpha-D-muramoyl-L-alanyl-D-glutamate contacts are provided by residues Asn154, 155–156 (TT), Ser182, Gln188, and Arg190. Lys222 is modified (N6-carboxylysine). Meso-2,6-diaminopimelate contacts are provided by residues Arg386, 410 to 413 (DNPR), Gly461, and Glu465. Positions 410–413 (DNPR) match the Meso-diaminopimelate recognition motif motif.

It belongs to the MurCDEF family. MurE subfamily. Requires Mg(2+) as cofactor. Carboxylation is probably crucial for Mg(2+) binding and, consequently, for the gamma-phosphate positioning of ATP.

The protein localises to the cytoplasm. It catalyses the reaction UDP-N-acetyl-alpha-D-muramoyl-L-alanyl-D-glutamate + meso-2,6-diaminopimelate + ATP = UDP-N-acetyl-alpha-D-muramoyl-L-alanyl-gamma-D-glutamyl-meso-2,6-diaminopimelate + ADP + phosphate + H(+). Its pathway is cell wall biogenesis; peptidoglycan biosynthesis. In terms of biological role, catalyzes the addition of meso-diaminopimelic acid to the nucleotide precursor UDP-N-acetylmuramoyl-L-alanyl-D-glutamate (UMAG) in the biosynthesis of bacterial cell-wall peptidoglycan. This Haemophilus influenzae (strain ATCC 51907 / DSM 11121 / KW20 / Rd) protein is UDP-N-acetylmuramoyl-L-alanyl-D-glutamate--2,6-diaminopimelate ligase.